A 306-amino-acid chain; its full sequence is Protein farnesyltransferase/geranylgeranyltransferase type-1 subunit alpha (306 aa).

5 PFTA repeats span residues 48–82 (YSER…NLPN), 84–118 (NLYD…QIME), 125–159 (DPYR…TFDL), 161–195 (NDAK…SKKH), and 201–235 (TIDE…RFDR).

It belongs to the protein prenyltransferase subunit alpha family. Heterodimer of an alpha and a beta subunit. It depends on Mg(2+) as a cofactor.

The catalysed reaction is L-cysteinyl-[protein] + (2E,6E)-farnesyl diphosphate = S-(2E,6E)-farnesyl-L-cysteinyl-[protein] + diphosphate. It carries out the reaction geranylgeranyl diphosphate + L-cysteinyl-[protein] = S-geranylgeranyl-L-cysteinyl-[protein] + diphosphate. Its function is as follows. Essential subunit of both the farnesyltransferase and the geranylgeranyltransferase complex. Contributes to the transfer of a farnesyl or geranylgeranyl moiety from farnesyl or geranylgeranyl diphosphate to a cysteine at the fourth position from the C-terminus of several proteins having the C-terminal sequence Cys-aliphatic-aliphatic-X. The chain is Protein farnesyltransferase/geranylgeranyltransferase type-1 subunit alpha (RAM2) from Candida albicans (Yeast).